Reading from the N-terminus, the 115-residue chain is Large ribosomal subunit protein bL19 (115 aa).

It belongs to the bacterial ribosomal protein bL19 family.

This protein is located at the 30S-50S ribosomal subunit interface and may play a role in the structure and function of the aminoacyl-tRNA binding site. The chain is Large ribosomal subunit protein bL19 from Pectobacterium carotovorum subsp. carotovorum (strain PC1).